An 85-amino-acid chain; its full sequence is UPF0386 protein MXAN_1729 (85 aa).

The protein belongs to the UPF0386 family.

In Myxococcus xanthus (strain DK1622), this protein is UPF0386 protein MXAN_1729.